The sequence spans 191 residues: Potassium-transporting ATPase KdpC subunit (191 aa).

The chain crosses the membrane as a helical span at residues 10-30 (ITLVFCVFFSVFYILVLWLFA).

Belongs to the KdpC family. As to quaternary structure, the system is composed of three essential subunits: KdpA, KdpB and KdpC.

Its subcellular location is the cell inner membrane. Functionally, part of the high-affinity ATP-driven potassium transport (or Kdp) system, which catalyzes the hydrolysis of ATP coupled with the electrogenic transport of potassium into the cytoplasm. This subunit acts as a catalytic chaperone that increases the ATP-binding affinity of the ATP-hydrolyzing subunit KdpB by the formation of a transient KdpB/KdpC/ATP ternary complex. This is Potassium-transporting ATPase KdpC subunit from Bacteroides fragilis (strain ATCC 25285 / DSM 2151 / CCUG 4856 / JCM 11019 / LMG 10263 / NCTC 9343 / Onslow / VPI 2553 / EN-2).